The primary structure comprises 226 residues: Exopolysaccharide production protein ExoY (226 aa).

The helical transmembrane segment at 34-54 threads the bilayer; the sequence is VLAASVALLLFSPLFLLIMAL.

It belongs to the bacterial sugar transferase family.

The protein resides in the cell membrane. Its pathway is glycan metabolism; exopolysaccharide biosynthesis. Its function is as follows. Needed for the addition of the first sugar (galactose) to the isoprenoid carrier. May function as a sugar transferase. The polypeptide is Exopolysaccharide production protein ExoY (exoY) (Rhizobium meliloti (strain 1021) (Ensifer meliloti)).